Consider the following 35-residue polypeptide: Alpha-amanitin proprotein 2 (35 aa).

Positions 1-10 are excised as a propeptide; sequence MFDTNSTRLP. The residue at position 11 (isoleucine 11) is a (3R,4R)-4,5-dihydroxyisoleucine; in form alpha-amanitin. The residue at position 11 (isoleucine 11) is a (3R,4S)-4-hydroxyisoleucine; in form gamma-amanitin. Positions 11–18 form a cross-link, cyclopeptide (Ile-Pro); sequence IWGIGCNP. The 2'-cysteinyl-6'-hydroxytryptophan sulfoxide (Trp-Cys) cross-link spans 12–16; it reads WGIGC. Position 18 is a 4-hydroxyproline (proline 18). Positions 19–35 are excised as a propeptide; the sequence is WTAEHVDQTLVSGNDIC.

This sequence belongs to the MSDIN fungal toxin family. Post-translationally, processed by the macrocyclase-peptidase enzyme POPB to yield a toxic bicyclic octapeptide. POPB first removes 10 residues from the N-terminus. Conformational trapping of the remaining peptide forces the enzyme to release this intermediate rather than proceed to macrocyclization. The enzyme rebinds the remaining peptide in a different conformation and catalyzes macrocyclization of the N-terminal 8 residues.

Major toxin belonging to the bicyclic octapeptides amatoxins that acts by binding non-competitively to RNA polymerase II and greatly slowing the elongation of transcripts from target promoters. This Galerina marginata (strain CBS 339.88) protein is Alpha-amanitin proprotein 2.